A 449-amino-acid chain; its full sequence is Elongation factor 1-alpha 1 (449 aa).

The tr-type G domain occupies Lys5–Ser230. The tract at residues Gly14–Ser21 is G1. A GTP-binding site is contributed by Gly14–Ser21. Lys55 is subject to N6,N6-dimethyllysine. The segment at Gly70–Asp74 is G2. Residue Lys79 is modified to N6,N6,N6-trimethyllysine. The tract at residues Asp91 to Gly94 is G3. GTP-binding positions include Asp91–His95 and Asn153–Asp156. The tract at residues Asn153 to Asp156 is G4. At Lys187 the chain carries N6,N6,N6-trimethyllysine. Residues Ser194–Phe196 are G5. Lys261 bears the N6-methyllysine mark. N6,N6,N6-trimethyllysine is present on residues Lys306 and Lys396. Residues Lys438 and Lys441 each participate in a glycyl lysine isopeptide (Lys-Gly) (interchain with G-Cter in ubiquitin) cross-link.

Belongs to the TRAFAC class translation factor GTPase superfamily. Classic translation factor GTPase family. EF-Tu/EF-1A subfamily.

The protein resides in the cytoplasm. Its function is as follows. This protein promotes the GTP-dependent binding of aminoacyl-tRNA to the A-site of ribosomes during protein biosynthesis. The sequence is that of Elongation factor 1-alpha 1 (A1) from Arabidopsis thaliana (Mouse-ear cress).